The chain runs to 254 residues: PF03932 family protein CutC (254 aa).

Belongs to the CutC family.

The protein localises to the cytoplasm. The chain is PF03932 family protein CutC from Yersinia pseudotuberculosis serotype I (strain IP32953).